A 376-amino-acid chain; its full sequence is UDP-N-acetylenolpyruvoylglucosamine reductase (376 aa).

In terms of domain architecture, FAD-binding PCMH-type spans 48–219 (VGGPARHLVI…LDVTMQFNLG (172 aa)). Residue Arg196 is part of the active site. Residue Ser274 is the Proton donor of the active site. Residue Glu368 is part of the active site.

The protein belongs to the MurB family. FAD is required as a cofactor.

The protein localises to the cytoplasm. It catalyses the reaction UDP-N-acetyl-alpha-D-muramate + NADP(+) = UDP-N-acetyl-3-O-(1-carboxyvinyl)-alpha-D-glucosamine + NADPH + H(+). It participates in cell wall biogenesis; peptidoglycan biosynthesis. Cell wall formation. The polypeptide is UDP-N-acetylenolpyruvoylglucosamine reductase (Cutibacterium acnes (strain DSM 16379 / KPA171202) (Propionibacterium acnes)).